The primary structure comprises 148 residues: Suppressor APC domain-containing protein 1 (148 aa).

The interval 120–148 (SRQQKGVTQPKEEMAQRGCTKGPRGPTRV) is disordered.

In Homo sapiens (Human), this protein is Suppressor APC domain-containing protein 1 (SAPCD1).